We begin with the raw amino-acid sequence, 429 residues long: Tubby-like F-box protein 5 (429 aa).

Positions T53–G108 constitute an F-box domain. The segment at Q360–N385 is disordered. Positions P374–Q383 are enriched in polar residues.

This sequence belongs to the TUB family. Mostly expressed in roots, flowers and siliques.

In Arabidopsis thaliana (Mouse-ear cress), this protein is Tubby-like F-box protein 5.